A 532-amino-acid chain; its full sequence is Alkaline phosphatase (532 aa).

Residues 1–20 form a disordered region; it reads MASERDPLLPVHGEGPESPS. Residues 27-47 traverse the membrane as a helical; Signal-anchor for type II membrane protein segment; that stretch reads WIKHGILLILVLSTVIFFYFF. A Mg(2+)-binding site is contributed by Asp68. Residue Asp68 coordinates Zn(2+). Catalysis depends on Ser115, which acts as the Phosphoserine intermediate. Asp166, Thr168, and Glu306 together coordinate Mg(2+). Zn(2+) contacts are provided by Asp311, His315, Asp352, His353, and His456.

It belongs to the alkaline phosphatase family. It depends on Mg(2+) as a cofactor. The cofactor is Zn(2+).

The protein localises to the membrane. The catalysed reaction is a phosphate monoester + H2O = an alcohol + phosphate. The protein is Alkaline phosphatase of Schizosaccharomyces pombe (strain 972 / ATCC 24843) (Fission yeast).